Here is a 170-residue protein sequence, read N- to C-terminus: Co-chaperone protein HscB homolog (170 aa).

The 75-residue stretch at 5–79 (DHFSLFGLPA…RARYLCEQAG (75 aa)) folds into the J domain.

The protein belongs to the HscB family. In terms of assembly, interacts with HscA and stimulates its ATPase activity.

Co-chaperone involved in the maturation of iron-sulfur cluster-containing proteins. Seems to help targeting proteins to be folded toward HscA. The chain is Co-chaperone protein HscB homolog from Bordetella petrii (strain ATCC BAA-461 / DSM 12804 / CCUG 43448).